Consider the following 279-residue polypeptide: MKNWKEIIHHQTFRYIDHSTQTDIEGKPNTALTSFAVDDTLAISVSEETSPPVIRLWVHSKTIVLGIPDSRLPFIDSGMQFIEQNNYQAVVRNSGGLAVALDEGVLNISLIIPGGKNLSIYDCYEAMVRFIQAMFHDLTNDIKAYEIVGSYCPGDYDLSIGGRKFAGISQRRVKNGISVQIYLDVEGNSNQRAEVIREFYNKGKKNMETSFTYPDVDPKVMGSLSELLGVALTVDDVQKRVVHTLEKLSDEIVEIPFQEEEIVNFKKRYKQMVKRNESN.

The BPL/LPL catalytic domain occupies 48 to 253 (ETSPPVIRLW…TLEKLSDEIV (206 aa)). The Acyl-thioester intermediate role is filled by C152.

The protein belongs to the octanoyltransferase LipL family.

The catalysed reaction is N(6)-octanoyl-L-lysyl-[glycine-cleavage complex H protein] + L-lysyl-[lipoyl-carrier protein] = N(6)-octanoyl-L-lysyl-[lipoyl-carrier protein] + L-lysyl-[glycine-cleavage complex H protein]. Its pathway is protein modification; protein lipoylation via endogenous pathway; protein N(6)-(lipoyl)lysine from octanoyl-[acyl-carrier-protein]. Catalyzes the amidotransfer (transamidation) of the octanoyl moiety from octanoyl-GcvH to the lipoyl domain of the E2 subunit of lipoate-dependent enzymes. This Oceanobacillus iheyensis (strain DSM 14371 / CIP 107618 / JCM 11309 / KCTC 3954 / HTE831) protein is Octanoyl-[GcvH]:protein N-octanoyltransferase.